The following is a 525-amino-acid chain: Rho guanine nucleotide exchange factor gef3 (525 aa).

The 197-residue stretch at alanine 72–leucine 268 folds into the DH domain.

The protein localises to the cytoplasm. Has a role in the control of cell polarity and cytokinesis. Involved in bipolar growth and septum formation. This Schizosaccharomyces pombe (strain 972 / ATCC 24843) (Fission yeast) protein is Rho guanine nucleotide exchange factor gef3 (gef3).